The chain runs to 419 residues: Glucose-1-phosphate adenylyltransferase (419 aa).

Alpha-D-glucose 1-phosphate contacts are provided by residues Y106, G171, 186-187, and S204; that span reads EK.

It belongs to the bacterial/plant glucose-1-phosphate adenylyltransferase family. Homotetramer.

It catalyses the reaction alpha-D-glucose 1-phosphate + ATP + H(+) = ADP-alpha-D-glucose + diphosphate. Its pathway is glycan biosynthesis; glycogen biosynthesis. In terms of biological role, involved in the biosynthesis of ADP-glucose, a building block required for the elongation reactions to produce glycogen. Catalyzes the reaction between ATP and alpha-D-glucose 1-phosphate (G1P) to produce pyrophosphate and ADP-Glc. The chain is Glucose-1-phosphate adenylyltransferase from Roseobacter denitrificans (strain ATCC 33942 / OCh 114) (Erythrobacter sp. (strain OCh 114)).